Here is a 435-residue protein sequence, read N- to C-terminus: T-cell defective protein 2 (435 aa).

Residues 65–146 (NASTSFQSQP…KTPDSLRKSI (82 aa)) are disordered. Residues 322–352 (TKISAKKEKEQKKSAAKEAALKEAKEKEMRI) are a coiled coil. Residues 393 to 419 (FFKANPPPAPRAPQAPELASGPRRIPT) form a disordered region.

Strongly expressed in the cytoplasm of the pharynx muscle cells and several head neurons, probably the IL1s or IL2s, throughout development. Also expressed in some other unidentified neurons in the tail region. Weakly expressed in the nuclei of the T-cells and the T-cell daughters. Not expressed in gonads and in P12 cell.

The protein localises to the nucleus. It localises to the cytoplasm. May act synergistically with the Wnt pathways to control T-cell fate specification, gonad development, and P12 cell fate specification. Required for the distribution of pop-1 and tlp-1 proteins. This is T-cell defective protein 2 (tcl-2) from Caenorhabditis elegans.